A 534-amino-acid polypeptide reads, in one-letter code: O-phosphoserine--tRNA(Cys) ligase (534 aa).

Residues 186 to 188, 231 to 233, 273 to 274, and Asn-325 each bind substrate; these read HMT, SAS, and YY.

This sequence belongs to the class-II aminoacyl-tRNA synthetase family. O-phosphoseryl-tRNA(Cys) synthetase subfamily. In terms of assembly, homotetramer. Interacts with SepCysS.

It catalyses the reaction tRNA(Cys) + O-phospho-L-serine + ATP = O-phospho-L-seryl-tRNA(Cys) + AMP + diphosphate. Catalyzes the attachment of O-phosphoserine (Sep) to tRNA(Cys). The sequence is that of O-phosphoserine--tRNA(Cys) ligase (sepS) from Archaeoglobus fulgidus (strain ATCC 49558 / DSM 4304 / JCM 9628 / NBRC 100126 / VC-16).